We begin with the raw amino-acid sequence, 457 residues long: RNA-binding suppressor of PAS kinase protein 1 (457 aa).

Residues Arg26–Asn88 form the R3H domain. 3 disordered regions span residues Ile142–Glu181, Leu195–Tyr291, and Phe406–Ile457. Residues Asn145–Asn158 are compositionally biased toward polar residues. A compositionally biased stretch (basic and acidic residues) spans Lys159–Glu181. Ser198 carries the phosphoserine modification. The segment covering Ser226–Thr247 has biased composition (low complexity). The span at Ile248 to Tyr258 shows a compositional bias: polar residues. A compositionally biased stretch (basic and acidic residues) spans Lys418 to Ser435. Ser435, Ser439, and Ser447 each carry phosphoserine. Basic and acidic residues predominate over residues Arg443–Ile457.

The protein localises to the cytoplasm. The protein is RNA-binding suppressor of PAS kinase protein 1 (RBS1) of Saccharomyces cerevisiae (strain ATCC 204508 / S288c) (Baker's yeast).